A 321-amino-acid polypeptide reads, in one-letter code: Serine protease 52 (321 aa).

The N-terminal stretch at 1–27 (MKRWKDRRTGLLLPLVLLLFGACSSLA) is a signal peptide. The Peptidase S1 domain occupies 56–287 (IVGGKPANIL…YVRWISKQTA (232 aa)). A disulfide bridge links Cys81 with Cys97. Catalysis depends on charge relay system residues His96 and Asp142. The N-linked (GlcNAc...) asparagine glycan is linked to Asn153. 3 disulfides stabilise this stretch: Cys175/Cys242, Cys208/Cys221, and Cys232/Cys263. Residue Ser236 is the Charge relay system of the active site. A helical transmembrane segment spans residues 300 to 320 (ACPLVLSCRAILFLYFVMFLL).

Belongs to the peptidase S1 family.

The protein localises to the membrane. Functionally, probable serine protease. This is Serine protease 52 (Prss52) from Mus musculus (Mouse).